A 114-amino-acid polypeptide reads, in one-letter code: Fumarate reductase subunit D (114 aa).

3 consecutive transmembrane segments (helical) span residues 24-44 (VSAI…PFGL), 50-70 (LITF…TIFP), and 92-112 (GGFI…FAVI).

The protein belongs to the FrdD family. Part of an enzyme complex containing four subunits: a flavoprotein (FrdA), an iron-sulfur protein (FrdB), and two hydrophobic anchor proteins (FrdC and FrdD).

The protein resides in the cell inner membrane. Functionally, anchors the catalytic components of the fumarate reductase complex to the cell membrane, binds quinones. The polypeptide is Fumarate reductase subunit D (Haemophilus influenzae (strain 86-028NP)).